Consider the following 247-residue polypeptide: Probable transcriptional regulatory protein EUBELI_00902 (247 aa).

This sequence belongs to the TACO1 family.

It is found in the cytoplasm. This chain is Probable transcriptional regulatory protein EUBELI_00902, found in Lachnospira eligens (strain ATCC 27750 / DSM 3376 / VPI C15-48 / C15-B4) (Eubacterium eligens).